We begin with the raw amino-acid sequence, 448 residues long: Potassium/proton antiporter CemA (448 aa).

4 helical membrane passes run 47–67, 213–233, 314–334, and 395–415; these read IVFY…LSLL, LSSL…STLF, IISH…LFVA, and IISC…KYLI.

The protein belongs to the CemA family.

The protein localises to the plastid membrane. The catalysed reaction is K(+)(in) + H(+)(out) = K(+)(out) + H(+)(in). In terms of biological role, may be involved in proton extrusion. The chain is Potassium/proton antiporter CemA from Aneura mirabilis (Parasitic liverwort).